Here is a 355-residue protein sequence, read N- to C-terminus: Homeobox protein knotted-1-like 12 (355 aa).

Disordered regions lie at residues 52–82 (AAGPSQYHGHGHPHHGGGHHHSKHGGAGGGE) and 207–233 (ECVGSSEDDMDPSGRENEPPEIDPRAE). Residues 60 to 75 (GHGHPHHGGGHHHSKH) show a composition bias toward basic residues. Residues 218-233 (PSGRENEPPEIDPRAE) are compositionally biased toward basic and acidic residues. The ELK domain occupies 236-256 (ELKFQLLKKYSGYLSSLRQEF). A DNA-binding region (homeobox; TALE-type) is located at residues 257-320 (SKKKKKGKLP…NQRKRHWKPS (64 aa)).

This sequence belongs to the TALE/KNOX homeobox family. In terms of tissue distribution, expressed in stems, rachis and inflorescence.

It localises to the nucleus. Probable transcription factor that may be involved in shoot formation during embryogenesis. The sequence is that of Homeobox protein knotted-1-like 12 (OSH15) from Oryza sativa subsp. japonica (Rice).